Reading from the N-terminus, the 1418-residue chain is Sterol 3-beta-glucosyltransferase (1418 aa).

The segment covering 1 to 16 has biased composition (basic and acidic residues); the sequence is MRPFLDDAKRRVDRKL. 3 disordered regions span residues 1 to 59, 83 to 188, and 207 to 233; these read MRPF…SREG, ARFD…RSAT, and LKAS…ASVS. A compositionally biased stretch (polar residues) spans 18 to 28; it reads ASRQSLSTSRL. Composition is skewed to basic and acidic residues over residues 35–44 and 95–105; these read DRLKDNHDAQ and SEQRPRKESSV. The span at 106 to 115 shows a compositional bias: polar residues; that stretch reads RKGTSASANT. The span at 116 to 126 shows a compositional bias: low complexity; that stretch reads SSPLDSSQRSS. 2 stretches are compositionally biased toward basic and acidic residues: residues 127–139 and 147–166; these read SRTD…ESGT and TISD…HEPQ. Over residues 209 to 219 the composition is skewed to polar residues; the sequence is ASSTERSQPSL. The GRAM 1 domain maps to 249-288; that stretch reads EKVLVEYACSLLQSILLQGYMYVTEGHICFYAYLPKKSTV. One can recognise a PH domain in the interval 289–387; sequence AIKSGYLYKR…WVKALQKVIF (99 aa). The disordered stretch occupies residues 462–651; the sequence is ISSQHLSPQP…DPTKSFSGAP (190 aa). Residues 486-497 show a composition bias toward polar residues; that stretch reads RWSLTSGTSRVL. Over residues 508 to 519 the composition is skewed to low complexity; the sequence is ASASTSHTSLAH. A compositionally biased stretch (polar residues) spans 534 to 575; it reads SESILNSFEQGTESSAAWQSMTDAAESASQILNRSDVFQSPT. Basic and acidic residues predominate over residues 578–598; it reads GLDRRPSGGERRGRRNSDETA. Polar residues predominate over residues 599–612; that stretch reads RSLSTRANVGTGQQ. The span at 615–633 shows a compositional bias: basic and acidic residues; it reads ELGRRMDGDTSGREARDST. Over residues 635–651 the composition is skewed to polar residues; it reads ESDQYTQDPTKSFSGAP. The region spanning 733–799 is the GRAM 2 domain; that stretch reads DRFRAHFALP…RDIENVEKEK (67 aa). UDP-alpha-D-glucose is bound by residues Ser920, Arg921, Asp923, Ala1223, His1225, His1238, Gly1242, Thr1243, Asp1262, and Gln1263. The interval 1339 to 1418 is disordered; it reads SIASSTPFSP…SGPGRKLSGR (80 aa). Low complexity predominate over residues 1341 to 1355; it reads ASSTPFSPTPSAKTT. A compositionally biased stretch (acidic residues) spans 1358-1379; sequence QDADDDVEDSEEWTFVGDDTDM. A compositionally biased stretch (basic and acidic residues) spans 1380–1391; it reads EMSRRLRDRAIS.

The protein belongs to the glycosyltransferase 28 family.

It is found in the cytoplasm. Its subcellular location is the preautophagosomal structure membrane. The catalysed reaction is a sterol + UDP-alpha-D-glucose = a sterol 3-beta-D-glucoside + UDP + H(+). The enzyme catalyses ergosterol + UDP-alpha-D-glucose = ergosteryl 3-beta-D-glucoside + UDP + H(+). Functionally, sterol glycosyltransferase responsible for the glycosylation of ergosterol to form ergosterol-glucoside. This Neosartorya fischeri (strain ATCC 1020 / DSM 3700 / CBS 544.65 / FGSC A1164 / JCM 1740 / NRRL 181 / WB 181) (Aspergillus fischerianus) protein is Sterol 3-beta-glucosyltransferase.